A 556-amino-acid chain; its full sequence is Testis-specific protein 10-interacting protein (556 aa).

A compositionally biased stretch (polar residues) spans 1 to 16; sequence MGQDTDMLNTYQQLVR. 4 disordered regions span residues 1–31, 50–102, 123–155, and 179–309; these read MGQD…LQAP, GCLG…LLPR, LQPS…ANLP, and GGVS…QWRK. Polar residues predominate over residues 208-219; sequence GSASDKQVQLQS. A compositionally biased stretch (acidic residues) spans 244–258; it reads SEEEQFSEATEEAEE. Residues 289–301 show a composition bias toward polar residues; sequence QGQSQGSSPSFNN. Residues 379–464 are a coiled coil; it reads RQEATRSLLQ…LQGIQHRVQA (86 aa). The interval 503 to 556 is disordered; that stretch reads AGKVDREGTPRKPRSHRSMGVRMEHSPQRPPRTEPTGSQPDRHYNPSLDPECSP.

The chain is Testis-specific protein 10-interacting protein (TSGA10IP) from Homo sapiens (Human).